The chain runs to 350 residues: MVASSQKILVTGGAGFIGTHTVVQLLNNGFNVSIIDNFDNSVMEAVERVREVVGSNLSQNLEFTLGDLRNKDDLEKLFSKSKFDAVIHFAGLKAVGESVENPRRYFDNNLVGTINLYEVMAKHNCKKMVFSSSATVYGQPEKIPCVEDFKLQAMNPYGRTKLFLEEIARDIQKAEPEWRIVLLRYFNPVGAHESGKLGEDPRGIPNNLMPYIQQVAVGRLPELNVYGHDYPTRDGSAIRDYIHVMDLADGHIAALRKLFTSENIGCTAYNLGTGRGSSVLEMVAAFEKASGKKIALKLCPRRPGDATEVYASTAKAEKELGWKAKYGVEEMCRDQWNWAKNNPWGYSGKP.

Residues 15 to 17 (GFI), 36 to 40 (DNFDN), 67 to 68 (DL), Phe-89, and Lys-93 contribute to the NAD(+) site. Ser-133 contacts substrate. Catalysis depends on Tyr-157, which acts as the Proton acceptor. NAD(+)-binding residues include Lys-161 and Tyr-185.

The protein belongs to the NAD(P)-dependent epimerase/dehydratase family. Requires NAD(+) as cofactor.

The catalysed reaction is UDP-alpha-D-glucose = UDP-alpha-D-galactose. It catalyses the reaction UDP-beta-L-arabinopyranose = UDP-alpha-D-xylose. It functions in the pathway carbohydrate metabolism; galactose metabolism. It participates in nucleotide-sugar biosynthesis; UDP-L-arabinose biosynthesis; UDP-L-arabinose from UDP-alpha-D-xylose: step 1/1. Its pathway is cell wall biogenesis; cell wall polysaccharide biosynthesis. Its activity is regulated as follows. Inhibited by Hg(2+). Its function is as follows. Catalyzes the interconversion between UDP-glucose and UDP-galactose and the interconversion between UDP-arabinose and UDP-xylose. The chain is Bifunctional UDP-glucose 4-epimerase and UDP-xylose 4-epimerase 1 from Pisum sativum (Garden pea).